Consider the following 1228-residue polypeptide: Minor fimbrium subunit Mfa5 (1228 aa).

Residues 1 to 25 (MMKRYTIILAVFLLFCTVFTFQIKA) form the signal peptide. The 124-residue stretch at 144 to 267 (DVVMVIDQSS…QYPVKNVTTA (124 aa)) folds into the VWFA domain.

In terms of assembly, minor fimbriae are composed of a structural subunit, most often Mfa1, and the accessory subunits Mfa3, Mfa4 and Mfa5. Fimbrium assembly occurs by linear, head-to-tail oligomerization of fimbrial subunits. This is mediated via insertion of a C-terminal beta-strand from one subunit into a groove in the N-terminal domain of the following subunit.

The protein localises to the fimbrium. Accessory subunit of the minor fimbriae. These filamentous pili are attached to the cell surface; they mediate biofilm formation, adhesion onto host cells and onto other bacteria that are part of the oral microbiome. They play an important role in invasion of periodontal tissues and are recognized as major virulence factors. Fimbrium subunits from different strains have highly divergent sequences, and this correlates with pathogenicity. The sequence is that of Minor fimbrium subunit Mfa5 from Porphyromonas gingivalis (strain ATCC 33277 / DSM 20709 / CIP 103683 / JCM 12257 / NCTC 11834 / 2561).